An 88-amino-acid polypeptide reads, in one-letter code: Small ribosomal subunit protein bS21 (88 aa).

The disordered stretch occupies residues 58–88 (ARKRAQREGLLPMTPRPVAAGGAAGAARPPR). Over residues 73 to 88 (RPVAAGGAAGAARPPR) the composition is skewed to low complexity.

It belongs to the bacterial ribosomal protein bS21 family.

The polypeptide is Small ribosomal subunit protein bS21 (Mesorhizobium japonicum (strain LMG 29417 / CECT 9101 / MAFF 303099) (Mesorhizobium loti (strain MAFF 303099))).